The chain runs to 371 residues: MPFLSDMLDQSRRQQDEEQALARENLAEASLLQAHLSHRSALRSRFRFDPAAVMDCLRAEVLGQDPALQAVEDMLKVVRADIADPRRPLFSALFLGPTGVGKTEIVRALARALHGDAEGFCRVDMNTLSQEHYAAALTGAPPGYVGAKEGTTLLEQDKLDGSPGRPGIVLFDELEKASPEVVHALLNVLDNGLLRVASGERTYHFRNTLVFMTSNLCAHEIQRYDERRQRLPWRLLPVGGERRRRDIDGMVRARLLKTFSPEFVNRLDSVVTFNWIERDVVARLVELEVQRLNRRLEKHRCRLEATPEVLAKIARAGFDRQFGARALRRSVRHHLEVPLAEHLLDHHQPGDGNCTTYLASLEHERVRFVRR.

G96 to T103 serves as a coordination point for ATP.

This sequence belongs to the ClpX chaperone family. The cofactor is Mg(2+).

In terms of biological role, unlikely to encode a regulatory protein. Has ATPase activity. AmiB and AmiS may act jointly into a two component ABC transporter system. In Pseudomonas aeruginosa (strain ATCC 15692 / DSM 22644 / CIP 104116 / JCM 14847 / LMG 12228 / 1C / PRS 101 / PAO1), this protein is ATP-dependent protease ATP-binding subunit-like protein AmiB (amiB).